A 72-amino-acid polypeptide reads, in one-letter code: Translation initiation factor IF-1 (72 aa).

The region spanning 1 to 72 is the S1-like domain; sequence MAKDDVIEVE…TRGRITYRYK (72 aa). Tyr-60 carries the phosphotyrosine modification.

It belongs to the IF-1 family. Component of the 30S ribosomal translation pre-initiation complex which assembles on the 30S ribosome in the order IF-2 and IF-3, IF-1 and N-formylmethionyl-tRNA(fMet); mRNA recruitment can occur at any time during PIC assembly.

The protein localises to the cytoplasm. Functionally, one of the essential components for the initiation of protein synthesis. Stabilizes the binding of IF-2 and IF-3 on the 30S subunit to which N-formylmethionyl-tRNA(fMet) subsequently binds. Helps modulate mRNA selection, yielding the 30S pre-initiation complex (PIC). Upon addition of the 50S ribosomal subunit IF-1, IF-2 and IF-3 are released leaving the mature 70S translation initiation complex. This Bacillus pumilus (strain SAFR-032) protein is Translation initiation factor IF-1.